A 397-amino-acid polypeptide reads, in one-letter code: ATP phosphoribosyltransferase regulatory subunit (397 aa).

This sequence belongs to the class-II aminoacyl-tRNA synthetase family. HisZ subfamily. In terms of assembly, heteromultimer composed of HisG and HisZ subunits.

Its subcellular location is the cytoplasm. It functions in the pathway amino-acid biosynthesis; L-histidine biosynthesis; L-histidine from 5-phospho-alpha-D-ribose 1-diphosphate: step 1/9. In terms of biological role, required for the first step of histidine biosynthesis. May allow the feedback regulation of ATP phosphoribosyltransferase activity by histidine. The sequence is that of ATP phosphoribosyltransferase regulatory subunit from Nitrosococcus oceani (strain ATCC 19707 / BCRC 17464 / JCM 30415 / NCIMB 11848 / C-107).